The primary structure comprises 328 residues: D-cysteine desulfhydrase (328 aa).

Position 51 is an N6-(pyridoxal phosphate)lysine (Lys51).

This sequence belongs to the ACC deaminase/D-cysteine desulfhydrase family. Homodimer. It depends on pyridoxal 5'-phosphate as a cofactor.

The enzyme catalyses D-cysteine + H2O = hydrogen sulfide + pyruvate + NH4(+) + H(+). Catalyzes the alpha,beta-elimination reaction of D-cysteine and of several D-cysteine derivatives. It could be a defense mechanism against D-cysteine. This chain is D-cysteine desulfhydrase, found in Salmonella paratyphi C (strain RKS4594).